The primary structure comprises 384 residues: MKTLPGIGVFGTGNTARVLISLLRADGFSIEALWGKTDEEAKELAEEMGIPFYTCHTDDVLLHQEVDLVCISIPPPLTRQIAVKALGIGKNVICEKAASSIDAFTMVKAARYYPKLMSLVGNALRFLPAFDRMRQLILEQNYVGEIRICDVRVYGGSLLSSNYSWICDDLMGGGGLHTLGTYLVDLLTHLTNKRAEKVHGFLKTFVKQNEAISGIRYVTSDDFCFFQMQMTGGACSTVTLNFNMPGTFVHEVMVVGSAGRLVVRGTELFGQKNSASEEKLLLSDPLTREIADISDFEKVPPPYLMGIAHMVKALRQSFQDQEDRRTWDQKPLSVAATFEDGLYMQRVVDAIKRSNRSGEWESVELTNDETDSNQNLSEVIQHNL.

The signal sequence occupies residues 1–25; the sequence is MKTLPGIGVFGTGNTARVLISLLRA. The disordered stretch occupies residues 358–384; the sequence is GEWESVELTNDETDSNQNLSEVIQHNL. Residues 372-384 show a composition bias toward polar residues; that stretch reads SNQNLSEVIQHNL.

It belongs to the Gfo/Idh/MocA family.

The protein resides in the secreted. It localises to the extracellular space. It is found in the extracellular matrix. Functionally, promotes matrix assembly. This Xenopus tropicalis (Western clawed frog) protein is Glucose-fructose oxidoreductase domain-containing protein 2 (gfod2).